The sequence spans 434 residues: MTTPRDNLAILAETDPVVYRLIQQELNRQRDHLEMIASENFTSPAVLAAQGSVLTNKYAEGLPGKRYYGGCEFIDEIEQLAIDRAKQLFGAAHANVQPHSGAQANFAVFLALLQPGDTIMGMDLAHGGHLTHGSPVNVSGKWFRVVHYGVDPQTERIDFDQVRDLARQHRPKLIICGYSAYPRIIDFAAFRAIADEVGAYLMADIAHIAGLVATGHHPNPVPICDVVTTTTHKTLRGPRGGLILTRDPELGKKLDKAVFPGSQGGPLEHVIAGKAVAFGEALQPSFAQYSAQVIANAQALAATLQRRGIRLVSGGTDNHLVLLDLRSVSAVLEKNGAADPVMTGKRADRLMEEIHITANKNTIPFDPQPPSVASGLRLGSPALTTRGLGPAEFEEIGEIIADCLFQPGDPGVLEACRRRVAELCRRFPLYPHLG.

(6S)-5,6,7,8-tetrahydrofolate contacts are provided by residues Leu-124 and 128–130; that span reads GHL. An N6-(pyridoxal phosphate)lysine modification is found at Lys-233. Residue Glu-249 coordinates (6S)-5,6,7,8-tetrahydrofolate.

It belongs to the SHMT family. As to quaternary structure, homodimer. Pyridoxal 5'-phosphate is required as a cofactor.

It is found in the cytoplasm. It catalyses the reaction (6R)-5,10-methylene-5,6,7,8-tetrahydrofolate + glycine + H2O = (6S)-5,6,7,8-tetrahydrofolate + L-serine. It functions in the pathway one-carbon metabolism; tetrahydrofolate interconversion. The protein operates within amino-acid biosynthesis; glycine biosynthesis; glycine from L-serine: step 1/1. Catalyzes the reversible interconversion of serine and glycine with tetrahydrofolate (THF) serving as the one-carbon carrier. This reaction serves as the major source of one-carbon groups required for the biosynthesis of purines, thymidylate, methionine, and other important biomolecules. Also exhibits THF-independent aldolase activity toward beta-hydroxyamino acids, producing glycine and aldehydes, via a retro-aldol mechanism. The sequence is that of Serine hydroxymethyltransferase from Synechococcus sp. (strain JA-3-3Ab) (Cyanobacteria bacterium Yellowstone A-Prime).